Here is a 290-residue protein sequence, read N- to C-terminus: uncharacterized protein (290 aa).

Transmembrane regions (helical) follow at residues 14–34, 82–102, 115–135, 158–174, and 176–196; these read ALLN…IGIL, ISSL…LIGG, NLIA…IYLY, DAFV…SSQL, and LPWV…KTAW.

It belongs to the cation diffusion facilitator (CDF) transporter (TC 2.A.4) family.

Its subcellular location is the cell membrane. This is an uncharacterized protein from Bacillus subtilis (strain 168).